Consider the following 1594-residue polypeptide: Protein SHORTAGE IN CHIASMATA 1 (1594 aa).

5 disordered regions span residues 1148–1180 (DSRS…SKKK), 1239–1283 (APFK…QPDF), 1396–1426 (AADI…YADN), 1491–1523 (RSRA…NTKR), and 1536–1594 (GGNK…LVWK). Residues 1151 to 1165 (SVMTDSSSSVSSGPD) are compositionally biased toward low complexity. 2 stretches are compositionally biased toward basic and acidic residues: residues 1254–1265 (PSKDPERFDKKS) and 1402–1414 (SSER…DSKY). Residues 1577–1594 (QSLSYTANGTGQTKLVWK) are compositionally biased toward polar residues.

It belongs to the XPF family. In terms of assembly, interacts with PTD. As to expression, highest levels in young buds, where male meiosis occurs. Also present at low levels in plantlets, leaves, flowers, and roots.

Its subcellular location is the nucleus. Essential for the formation of class I meiotic crossovers. The polypeptide is Protein SHORTAGE IN CHIASMATA 1 (Arabidopsis thaliana (Mouse-ear cress)).